The following is a 96-amino-acid chain: Signal recognition particle 19 kDa protein (96 aa).

Belongs to the SRP19 family. In terms of assembly, part of the signal recognition particle protein translocation system, which is composed of SRP and FtsY. Archaeal SRP consists of a 7S RNA molecule of 300 nucleotides and two protein subunits: SRP54 and SRP19.

The protein resides in the cytoplasm. In terms of biological role, involved in targeting and insertion of nascent membrane proteins into the cytoplasmic membrane. Binds directly to 7S RNA and mediates binding of the 54 kDa subunit of the SRP. This chain is Signal recognition particle 19 kDa protein, found in Pyrobaculum arsenaticum (strain DSM 13514 / JCM 11321 / PZ6).